Here is a 494-residue protein sequence, read N- to C-terminus: DnaJ-related protein rsp1 (494 aa).

The region spanning 12–78 (DYYTILGAES…KLRELFDQRR (67 aa)) is the J domain. Residues 229 to 242 (SEISNGLNSNGVEN) show a composition bias toward polar residues. The interval 229–354 (SEISNGLNSN…NDSTSNSTEY (126 aa)) is disordered. The span at 243 to 256 (SSITKSSPRSSSSS) shows a compositional bias: low complexity. Polar residues predominate over residues 270–287 (IFTSPNTPEHPSVYQTDI). A compositionally biased stretch (low complexity) spans 321–331 (LSRSKSSSLSR). Residues 332–354 (NQTRSQLNDLSAENDSTSNSTEY) show a composition bias toward polar residues.

In terms of assembly, interacts iwth ssa1.

The protein resides in the cytoplasm. It is found in the cytoskeleton. It localises to the nucleus. Has a role in the proper organization of the interphase microtubule cytoskeleton. Required for equatorial microtubule organizing center (eMTOC) disassembly into satellites, contributing to the dynamic redistribution of MTOC components for organization of interphase microtubules. This Schizosaccharomyces pombe (strain 972 / ATCC 24843) (Fission yeast) protein is DnaJ-related protein rsp1 (rsp1).